The sequence spans 124 residues: UPF0738 protein GWCH70_0774 (124 aa).

Belongs to the UPF0738 family.

This chain is UPF0738 protein GWCH70_0774, found in Geobacillus sp. (strain WCH70).